A 306-amino-acid polypeptide reads, in one-letter code: Protein SULFUR DEFICIENCY-INDUCED 1 (306 aa).

5 TPR repeats span residues 1–22 (MERSLKKTKNNYNNSIKSNLMK), 71–104 (DSALKDMAVVMKQLDRSEEAIEAIKSFRPRCSKN), 107–140 (DSLDNVLIDLYKKCGRMEEQVELLKRKLRQIYQG), 167–200 (SRLLGNLGWAYMQQAKYLSAEAVYRKAQMVEPDA), and 202–233 (KSCNLAMCLIKQGRFEEGRLVLDDVLEYRVLG). Positions 72 to 139 (SALKDMAVVM…LKRKLRQIYQ (68 aa)) form a coiled coil. Positions 238–260 (RTRQRAEELLSELESSLPRMRDA) form a coiled coil. The stretch at 270-304 (LDDDFVLGLEEMTSTSFKSKRLPIFEQISSFRNTL) is one TPR 6 repeat.

Belongs to the MS5 protein family.

It is found in the nucleus. Functionally, involved in the utilization of stored sulfate under sulfur-deficient conditions. This Arabidopsis thaliana (Mouse-ear cress) protein is Protein SULFUR DEFICIENCY-INDUCED 1.